A 312-amino-acid polypeptide reads, in one-letter code: 1-phosphofructokinase (312 aa).

ATP contacts are provided by residues 223-228 and 254-255; these read SLGAEG and GD. The Proton acceptor role is filled by D255.

This sequence belongs to the carbohydrate kinase PfkB family.

It carries out the reaction beta-D-fructose 1-phosphate + ATP = beta-D-fructose 1,6-bisphosphate + ADP + H(+). Functionally, catalyzes the ATP-dependent phosphorylation of fructose-l-phosphate to fructose-l,6-bisphosphate. In Escherichia coli O157:H7, this protein is 1-phosphofructokinase (fruK).